We begin with the raw amino-acid sequence, 203 residues long: ATP-dependent Clp protease proteolytic subunit 1 (203 aa).

The Nucleophile role is filled by Ser98. Residue His123 is part of the active site.

Belongs to the peptidase S14 family. In terms of assembly, fourteen ClpP subunits assemble into 2 heptameric rings which stack back to back to give a disk-like structure with a central cavity, resembling the structure of eukaryotic proteasomes.

It is found in the cytoplasm. The enzyme catalyses Hydrolysis of proteins to small peptides in the presence of ATP and magnesium. alpha-casein is the usual test substrate. In the absence of ATP, only oligopeptides shorter than five residues are hydrolyzed (such as succinyl-Leu-Tyr-|-NHMec, and Leu-Tyr-Leu-|-Tyr-Trp, in which cleavage of the -Tyr-|-Leu- and -Tyr-|-Trp bonds also occurs).. Its function is as follows. Cleaves peptides in various proteins in a process that requires ATP hydrolysis. Has a chymotrypsin-like activity. Plays a major role in the degradation of misfolded proteins. The chain is ATP-dependent Clp protease proteolytic subunit 1 from Chlamydia felis (strain Fe/C-56) (Chlamydophila felis).